The chain runs to 235 residues: Small ribosomal subunit protein uS2 (235 aa).

Belongs to the universal ribosomal protein uS2 family.

The polypeptide is Small ribosomal subunit protein uS2 (Thermoanaerobacter sp. (strain X514)).